Consider the following 307-residue polypeptide: Homoserine kinase (307 aa).

85-95 (PLTRGLGSSAA) contacts ATP.

It belongs to the GHMP kinase family. Homoserine kinase subfamily.

It is found in the cytoplasm. The enzyme catalyses L-homoserine + ATP = O-phospho-L-homoserine + ADP + H(+). Its pathway is amino-acid biosynthesis; L-threonine biosynthesis; L-threonine from L-aspartate: step 4/5. In terms of biological role, catalyzes the ATP-dependent phosphorylation of L-homoserine to L-homoserine phosphate. The protein is Homoserine kinase of Caldicellulosiruptor bescii (strain ATCC BAA-1888 / DSM 6725 / KCTC 15123 / Z-1320) (Anaerocellum thermophilum).